We begin with the raw amino-acid sequence, 183 residues long: UPF0316 protein GTNG_0803 (183 aa).

3 consecutive transmembrane segments (helical) span residues 5 to 25, 33 to 53, and 59 to 79; these read IVLV…RTIF, LAAF…SIVF, and YIVM…LEDI.

It belongs to the UPF0316 family.

The protein localises to the cell membrane. The protein is UPF0316 protein GTNG_0803 of Geobacillus thermodenitrificans (strain NG80-2).